Here is a 179-residue protein sequence, read N- to C-terminus: MAALQKSVSSFLMGTLATSCLLLLALLVQGGAAAPISSHCRLDKSNFQQPYITNRTFMLAKEASLADNNTDVRLIGEKLFHGVSMSERCYLMKQVLNFTLEEVLFPQSDRFQPYMQEVVPFLARLSNRLSTCHIEGDDLHIQRNVQKLKDTVKKLGESGEIKAIGELDLLFMSLRNACI.

A signal peptide spans 1–33; the sequence is MAALQKSVSSFLMGTLATSCLLLLALLVQGGAA. 2 cysteine pairs are disulfide-bonded: C40/C132 and C89/C178. N54, N68, and N97 each carry an N-linked (GlcNAc...) asparagine glycan.

Belongs to the IL-10 family.

It localises to the secreted. Cytokine that plays a critical role in modulating tissue responses during inflammation. Plays an essential role in the regeneration of epithelial cells to maintain barrier function after injury and for the prevention of further tissue damage. Unlike most of the cytokines, has no effect on immune cells. Signals through a heterodimeric receptor composed of two subunits, the specific receptor IL22RA1 which is present on non-immune cells in many organs and the shared subunit IL10RB. Ligation of IL22RA1 with IL22 induces activation of the tyrosine kinases JAK1 and TYK2, which in turn activates STAT3. In turn, promotes cell survival and proliferation through STAT3, ERK1/2 and PI3K/AKT pathways. Promotes phosphorylation of GSK3B at 'Ser-9' and CTTN. Promotes epithelial cell spreading. The polypeptide is Interleukin-22 (IL22) (Homo sapiens (Human)).